Consider the following 430-residue polypeptide: Adenylosuccinate synthetase (430 aa).

GTP is bound by residues 13-19 and 41-43; these read GDEGKGK and GHT. D14 functions as the Proton acceptor in the catalytic mechanism. Mg(2+) contacts are provided by D14 and G41. IMP contacts are provided by residues 14-17, 39-42, T130, R144, Q225, T240, and R304; these read DEGK and NAGH. The active-site Proton donor is H42. Position 300–306 (300–306) interacts with substrate; the sequence is STTGRAR. Residues R306, 332 to 334, and 414 to 416 each bind GTP; these read KLD and STG.

This sequence belongs to the adenylosuccinate synthetase family. As to quaternary structure, homodimer. Mg(2+) serves as cofactor.

It is found in the cytoplasm. The catalysed reaction is IMP + L-aspartate + GTP = N(6)-(1,2-dicarboxyethyl)-AMP + GDP + phosphate + 2 H(+). The protein operates within purine metabolism; AMP biosynthesis via de novo pathway; AMP from IMP: step 1/2. In terms of biological role, plays an important role in the de novo pathway of purine nucleotide biosynthesis. Catalyzes the first committed step in the biosynthesis of AMP from IMP. This is Adenylosuccinate synthetase from Pseudomonas entomophila (strain L48).